Consider the following 364-residue polypeptide: Chorismate synthase (364 aa).

The NADP(+) site is built by arginine 48 and arginine 54. FMN contacts are provided by residues 125-127, 238-239, glycine 278, 293-297, and arginine 319; these read RSS, NA, and KPTSS.

Belongs to the chorismate synthase family. In terms of assembly, homotetramer. Requires FMNH2 as cofactor.

The enzyme catalyses 5-O-(1-carboxyvinyl)-3-phosphoshikimate = chorismate + phosphate. It participates in metabolic intermediate biosynthesis; chorismate biosynthesis; chorismate from D-erythrose 4-phosphate and phosphoenolpyruvate: step 7/7. In terms of biological role, catalyzes the anti-1,4-elimination of the C-3 phosphate and the C-6 proR hydrogen from 5-enolpyruvylshikimate-3-phosphate (EPSP) to yield chorismate, which is the branch point compound that serves as the starting substrate for the three terminal pathways of aromatic amino acid biosynthesis. This reaction introduces a second double bond into the aromatic ring system. This Marinobacter nauticus (strain ATCC 700491 / DSM 11845 / VT8) (Marinobacter aquaeolei) protein is Chorismate synthase.